A 388-amino-acid chain; its full sequence is 3-dehydroquinate synthase (388 aa).

It belongs to the archaeal-type DHQ synthase family.

It catalyses the reaction 2-amino-2,3,7-trideoxy-D-lyxo-hept-6-ulosonate + NAD(+) + H2O = 3-dehydroquinate + NH4(+) + NADH + H(+). In terms of biological role, catalyzes the oxidative deamination and cyclization of 2-amino-3,7-dideoxy-D-threo-hept-6-ulosonic acid (ADH) to yield 3-dehydroquinate (DHQ), which is fed into the canonical shikimic pathway of aromatic amino acid biosynthesis. The sequence is that of 3-dehydroquinate synthase from Natronomonas pharaonis (strain ATCC 35678 / DSM 2160 / CIP 103997 / JCM 8858 / NBRC 14720 / NCIMB 2260 / Gabara) (Halobacterium pharaonis).